The sequence spans 1332 residues: Aldehyde oxidase 1 (1332 aa).

Positions 4–91 (STLYFYVNGR…GAAVTTVEGV (88 aa)) constitute a 2Fe-2S ferredoxin-type domain. 4 residues coordinate [2Fe-2S] cluster: cysteine 43, cysteine 48, cysteine 51, and cysteine 73. Glutamine 112 contacts Mo-molybdopterin. [2Fe-2S] cluster-binding residues include cysteine 113, cysteine 116, cysteine 148, and cysteine 150. Cysteine 150 provides a ligand contact to Mo-molybdopterin. In terms of domain architecture, FAD-binding PCMH-type spans 234-419 (FTGDRVTWIS…LSVTIPYSRK (186 aa)). Residues 262 to 269 (VVMGNTSV), alanine 343, serine 352, histidine 356, aspartate 365, and leucine 409 each bind FAD. Mo-molybdopterin is bound by residues 800-801 (AF), methionine 1041, 1082-1085 (GSVV), glutamine 1197, and leucine 1262. The Proton acceptor; for azaheterocycle hydroxylase activity role is filled by glutamate 1264.

The protein belongs to the xanthine dehydrogenase family. As to quaternary structure, homodimer. The cofactor is [2Fe-2S] cluster. Requires FAD as cofactor. Mo-molybdopterin is required as a cofactor. As to expression, expressed in liver.

Its subcellular location is the cytoplasm. The catalysed reaction is an aldehyde + O2 + H2O = a carboxylate + H2O2 + H(+). The enzyme catalyses retinal + O2 + H2O = retinoate + H2O2 + H(+). Inhibited by menadione and isovanillin. Not inhibited by allopurinol, a xanthine dehydrogenase potent inhibitor. Functionally, oxidase with broad substrate specificity, oxidizing aromatic azaheterocycles, such as N1-methylnicotinamide, N-methylphthalazinium and phthalazine, as well as aldehydes, such as benzaldehyde, retinal, pyridoxal, and vanillin. Plays a key role in the metabolism of xenobiotics and drugs containing aromatic azaheterocyclic substituents. Participates in the bioactivation of prodrugs such as famciclovir, catalyzing the oxidation step from 6-deoxypenciclovir to penciclovir, which is a potent antiviral agent. Is probably involved in the regulation of reactive oxygen species homeostasis. May be a prominent source of superoxide generation via the one-electron reduction of molecular oxygen. May also catalyze nitric oxide (NO) production via the reduction of nitrite to NO with NADH or aldehyde as electron donor. May play a role in adipogenesis. This is Aldehyde oxidase 1 from Cavia porcellus (Guinea pig).